The chain runs to 334 residues: Putative lysine N-acyltransferase C17G9.06c (334 aa).

Position 248 (histidine 248) interacts with substrate. Catalysis depends on glutamate 286, which acts as the Proton acceptor.

The protein belongs to the lysine N-acyltransferase mbtK family.

It is found in the cytoplasm. The protein localises to the nucleus. This is Putative lysine N-acyltransferase C17G9.06c from Schizosaccharomyces pombe (strain 972 / ATCC 24843) (Fission yeast).